Consider the following 355-residue polypeptide: uncharacterized protein (355 aa).

Residue 132-139 (GPPGCGKT) coordinates ATP.

This sequence belongs to the AAA ATPase family.

The protein resides in the mitochondrion. This is an uncharacterized protein from Schizosaccharomyces pombe (strain 972 / ATCC 24843) (Fission yeast).